We begin with the raw amino-acid sequence, 743 residues long: Coiled-coil domain-containing protein 30 (743 aa).

2 stretches are compositionally biased toward basic and acidic residues: residues 1–22 (MSQEKNEMFESEWSKEREREKQ) and 133–193 (SPKE…MKPE). 4 disordered regions span residues 1–25 (MSQEKNEMFESEWSKEREREKQLAS), 114–193 (ENIC…MKPE), 208–233 (SLLQSQSSGDSSDDSGAQYPSSGDKL), and 695–715 (SKEAMASSKSPEKSPENLVCS). Coiled-coil stretches lie at residues 21–98 (KQLA…QLNH) and 165–580 (REGQ…LIHS). Residues 208–223 (SLLQSQSSGDSSDDSG) show a composition bias toward low complexity.

This sequence belongs to the prefoldin subunit beta family.

The sequence is that of Coiled-coil domain-containing protein 30 (CCDC30) from Macaca fascicularis (Crab-eating macaque).